Consider the following 250-residue polypeptide: Hydroxyacylglutathione hydrolase (250 aa).

Residues H52, H54, D56, H57, H107, D128, and H166 each contribute to the Zn(2+) site.

Belongs to the metallo-beta-lactamase superfamily. Glyoxalase II family. Monomer. Requires Zn(2+) as cofactor.

It catalyses the reaction an S-(2-hydroxyacyl)glutathione + H2O = a 2-hydroxy carboxylate + glutathione + H(+). Its pathway is secondary metabolite metabolism; methylglyoxal degradation; (R)-lactate from methylglyoxal: step 2/2. Thiolesterase that catalyzes the hydrolysis of S-D-lactoyl-glutathione to form glutathione and D-lactic acid. The polypeptide is Hydroxyacylglutathione hydrolase (Neisseria gonorrhoeae (strain ATCC 700825 / FA 1090)).